The primary structure comprises 635 residues: MKFKLIIFIIIIYIIKILKSEILNEFGYGLVDENLKCLSFIGDSNNQQLCNNKLINKQLIYSTINKSNQIQSLKMVEQSFKQLTFLQGKCLNLNFAQFGICDIYFPSCVETSFGISLPKRLCKSVCKQIVTDCPTLGVSLNCSDSNKFPTIGTLYNLTKYGYTENNGFYQVECSNPTNYYYNEINSTNNQFIEICPSPLVLRNQSDSKYGEDKGYTYLSPTNCVLGCPQPFFKNNKWVQMYKMSIVLSTLSFICSIYNIITFGLLSKLKSKYNLCITFFSVSTVLMSLMDIVTYGIGYEELLCPESGRYAIQSDVACGVTGAFFHIGITTGVLWWTTMSICLYSEVKRFKMISFRYIIIFNSVISLILLIIPLSGQAFMSGNGSLGCWIRKTWYANGTFWIPCGISLFIGAICIVLVIYEIFKISRNLSKDNKPLMFQIRPFLCVLLVGGSFLYLFIFYFNNERNLDKYKAAIPSYVQCLLSSDENGEDCLTDGPGFGAYFTFYFFTRLFGITSFSIYGTSKIARDIWFESAYNHPFFNPYIVKCLSLLGISKHFSSNSISGSNQKRFNRNGSNFNMKQNKSNPNDSISLSVVESTKKQDTENELESNIETKENRSTDISIENTTSSKDSNTNSF.

A signal peptide spans 1-20 (MKFKLIIFIIIIYIIKILKS). At 21–244 (EILNEFGYGL…NKWVQMYKMS (224 aa)) the chain is on the extracellular side. Residues 32–166 (DENLKCLSFI…LTKYGYTENN (135 aa)) form the FZ domain. Intrachain disulfides connect Cys-37/Cys-108 and Cys-50/Cys-101. N-linked (GlcNAc...) asparagine glycans are attached at residues Asn-65, Asn-141, Asn-156, Asn-185, and Asn-203. A helical membrane pass occupies residues 245-265 (IVLSTLSFICSIYNIITFGLL). At 266–275 (SKLKSKYNLC) the chain is on the cytoplasmic side. The chain crosses the membrane as a helical span at residues 276 to 296 (ITFFSVSTVLMSLMDIVTYGI). At 297-314 (GYEELLCPESGRYAIQSD) the chain is on the extracellular side. A helical transmembrane segment spans residues 315–335 (VACGVTGAFFHIGITTGVLWW). Over 336–356 (TTMSICLYSEVKRFKMISFRY) the chain is Cytoplasmic. The helical transmembrane segment at 357 to 377 (IIIFNSVISLILLIIPLSGQA) threads the bilayer. Residues 378 to 398 (FMSGNGSLGCWIRKTWYANGT) are Extracellular-facing. N-linked (GlcNAc...) asparagine glycosylation is found at Asn-382 and Asn-396. A helical membrane pass occupies residues 399-419 (FWIPCGISLFIGAICIVLVIY). The Cytoplasmic portion of the chain corresponds to 420-440 (EIFKISRNLSKDNKPLMFQIR). The helical transmembrane segment at 441–461 (PFLCVLLVGGSFLYLFIFYFN) threads the bilayer. The Extracellular segment spans residues 462–496 (NERNLDKYKAAIPSYVQCLLSSDENGEDCLTDGPG). Residues 497–517 (FGAYFTFYFFTRLFGITSFSI) form a helical membrane-spanning segment. Over 518–635 (YGTSKIARDI…SSKDSNTNSF (118 aa)) the chain is Cytoplasmic. Polar residues predominate over residues 559–594 (SISGSNQKRFNRNGSNFNMKQNKSNPNDSISLSVVE). Residues 559-635 (SISGSNQKRF…SSKDSNTNSF (77 aa)) form a disordered region. Residues 594–623 (ESTKKQDTENELESNIETKENRSTDISIEN) adopt a coiled-coil conformation. Residues 623–635 (NTTSSKDSNTNSF) show a composition bias toward low complexity.

It belongs to the G-protein coupled receptor Fz/Smo family.

It localises to the membrane. The protein is Frizzled and smoothened-like protein C (fslC) of Dictyostelium discoideum (Social amoeba).